The following is a 259-amino-acid chain: Ribosomal RNA small subunit methyltransferase J (259 aa).

S-adenosyl-L-methionine contacts are provided by residues 101 to 102 (RD), 117 to 118 (ER), 153 to 154 (SS), and Asp176.

Belongs to the methyltransferase superfamily. RsmJ family.

The protein resides in the cytoplasm. The catalysed reaction is guanosine(1516) in 16S rRNA + S-adenosyl-L-methionine = N(2)-methylguanosine(1516) in 16S rRNA + S-adenosyl-L-homocysteine + H(+). In terms of biological role, specifically methylates the guanosine in position 1516 of 16S rRNA. The chain is Ribosomal RNA small subunit methyltransferase J from Vibrio campbellii (strain ATCC BAA-1116).